The chain runs to 94 residues: Progonadoliberin-3 (94 aa).

The first 23 residues, 1–23 (MEGKGRVLVQLLMLACVLEVSLC), serve as a signal peptide directing secretion. A Pyrrolidone carboxylic acid modification is found at Q24. G33 is modified (glycine amide).

The protein belongs to the GnRH family.

The protein localises to the secreted. Functionally, stimulates the secretion of gonadotropins. The chain is Progonadoliberin-3 (gnrh3) from Carassius auratus (Goldfish).